The sequence spans 119 residues: Large ribosomal subunit protein bL20 (119 aa).

This sequence belongs to the bacterial ribosomal protein bL20 family.

In terms of biological role, binds directly to 23S ribosomal RNA and is necessary for the in vitro assembly process of the 50S ribosomal subunit. It is not involved in the protein synthesizing functions of that subunit. The polypeptide is Large ribosomal subunit protein bL20 (Dehalococcoides mccartyi (strain ATCC BAA-2266 / KCTC 15142 / 195) (Dehalococcoides ethenogenes (strain 195))).